Consider the following 86-residue polypeptide: Mu-theraphotoxin-Hhn1c (86 aa).

Residues 1 to 21 (MKASMFLALAGLALLFVVCYA) form the signal peptide. The propeptide occupies 22–49 (SESEEKEFSNELLSSVLAVDDNSKGEER). Intrachain disulfides connect cysteine 51-cysteine 66, cysteine 58-cysteine 73, and cysteine 65-cysteine 80. Isoleucine 84 carries the post-translational modification Isoleucine amide.

The protein belongs to the neurotoxin 10 (Hwtx-1) family. 22 (Htx-4) subfamily. As to quaternary structure, monomer. In terms of tissue distribution, expressed by the venom gland.

The protein localises to the secreted. In terms of biological role, neurotoxin. Selectively blocks neuronal tetrodotoxin-sensitive voltage-gated sodium channels (Nav). Does not affect tetrodotoxin-resistant voltage-gated sodium channels or calcium channels. The polypeptide is Mu-theraphotoxin-Hhn1c (Cyriopagopus hainanus (Chinese bird spider)).